Here is a 243-residue protein sequence, read N- to C-terminus: Vesicle-associated membrane protein-associated protein B/C (243 aa).

A2 bears the N-acetylalanine mark. Residues 2-222 (AKVEQVLSLE…PTGKEEGLST (221 aa)) lie on the Cytoplasmic side of the membrane. The MSP domain occupies 7–124 (VLSLEPQHEL…MDSKLRCVFE (118 aa)). S146 bears the Phosphoserine mark. A Glycyl lysine isopeptide (Lys-Gly) (interchain with G-Cter in SUMO1) cross-link involves residue K147. T150 is subject to Phosphothreonine. Phosphoserine is present on residues S156, S158, S159, S160, and S206. The stretch at 159–196 (SSLDDTEVKKVMEECKRLQGEVQRLREENKQFKEEDGL) forms a coiled coil. The chain crosses the membrane as a helical; Anchor for type IV membrane protein span at residues 223-243 (RLLALVVLFFIVGVIIGKIAL).

The protein belongs to the VAMP-associated protein (VAP) (TC 9.B.17) family. Homodimer, and heterodimer with VAPA. Interacts with VAMP1 and VAMP2. Interacts (via MSP domain) with ZFYVE27. Interacts with RMDN3. Interacts with KIF5A in a ZFYVE27-dependent manner. Interacts (via MSP domain) with STARD3 (via phospho-FFAT motif). Interacts with STARD3NL (via FFAT motif). Interacts with CERT1. Interacts with PLEKHA3 and SACM1L to form a ternary complex. Interacts with VPS13A (via FFAT motif). Interacts with RB1CC1 (via phosphorylated FFAT motif), MIGA2 (via phosphorylated FFAT motif), RMDN3 (via phosphorylated FFAT motif), OSBPL1A (via FFAT motif), KCNB1 (via phosphorylated FFAT motif) and KCNB2 (via phosphorylated FFAT motif). Interacts (via MSP domain) with WDR44 (via FFAT motif); the interactions connect the endoplasmic reticulum (ER) with the endosomal tubule. In terms of assembly, (Microbial infection) Interacts (via MSP domain) with hepatitis C virus (HCV) non-structural protein 5A (via disordered domain D3). Interacts with HCV RNA-directed RNA polymerase. In terms of tissue distribution, ubiquitous. Isoform 1 predominates.

The protein localises to the endoplasmic reticulum membrane. In terms of biological role, endoplasmic reticulum (ER)-anchored protein that mediates the formation of contact sites between the ER and endosomes via interaction with FFAT motif-containing proteins such as STARD3 or WDR44. Interacts with STARD3 in a FFAT motif phosphorylation dependent manner. Via interaction with WDR44 participates in neosynthesized protein export. Participates in the endoplasmic reticulum unfolded protein response (UPR) by inducing ERN1/IRE1 activity. Involved in cellular calcium homeostasis regulation. In Homo sapiens (Human), this protein is Vesicle-associated membrane protein-associated protein B/C.